The following is a 173-amino-acid chain: Insertion element IS1397 uncharacterized 20.1 kDa protein (173 aa).

The disordered stretch occupies residues 115–135 (KSMTRSDDTHENEANMTPEEM).

Belongs to the IS150/IS1296 orfA family.

In Escherichia coli, this protein is Insertion element IS1397 uncharacterized 20.1 kDa protein.